A 202-amino-acid chain; its full sequence is Securin (202 aa).

The interval 36 to 55 (DGRSQVSTPHVGKMFDAPPA) is disordered. The D-box motif lies at 61–64 (RKAL). Short sequence motifs (TEK-box) lie at residues 71–73 (TEK) and 94–96 (TEK). The SH3-binding signature appears at 163–173 (PPSPLKMPPLL). At serine 165 the chain carries Phosphoserine; by CDK1.

The protein belongs to the securin family. Interacts with RPS10 and DNAJA1. Interacts with the caspase-like ESPL1, and prevents its protease activity probably by covering its active site. Interacts with TP53 and blocks its activity probably by blocking its binding to DNA. Interacts with the Ku 70 kDa subunit of ds-DNA kinase. Interacts with PTTG1IP. Post-translationally, phosphorylated at Ser-165 by CDK1 during mitosis. Phosphorylated in vitro by ds-DNA kinase. In terms of processing, ubiquitinated through 'Lys-11' linkage of ubiquitin moieties by the anaphase promoting complex (APC) at the onset of anaphase, conducting to its degradation. 'Lys-11'-linked ubiquitination is mediated by the E2 ligase UBE2C/UBCH10.

The protein localises to the cytoplasm. The protein resides in the nucleus. In terms of biological role, regulatory protein, which plays a central role in chromosome stability, in the p53/TP53 pathway, and DNA repair. Probably acts by blocking the action of key proteins. During the mitosis, it blocks Separase/ESPL1 function, preventing the proteolysis of the cohesin complex and the subsequent segregation of the chromosomes. At the onset of anaphase, it is ubiquitinated, conducting to its destruction and to the liberation of ESPL1. Its function is however not limited to a blocking activity, since it is required to activate ESPL1. Negatively regulates the transcriptional activity and related apoptosis activity of TP53. The negative regulation of TP53 may explain the strong transforming capability of the protein when it is overexpressed. May also play a role in DNA repair via its interaction with Ku, possibly by connecting DNA damage-response pathways with sister chromatid separation. The chain is Securin (PTTG1) from Bos taurus (Bovine).